We begin with the raw amino-acid sequence, 259 residues long: Imidazole glycerol phosphate synthase subunit HisF (259 aa).

Active-site residues include aspartate 11 and aspartate 130.

Belongs to the HisA/HisF family. Heterodimer of HisH and HisF.

It localises to the cytoplasm. It carries out the reaction 5-[(5-phospho-1-deoxy-D-ribulos-1-ylimino)methylamino]-1-(5-phospho-beta-D-ribosyl)imidazole-4-carboxamide + L-glutamine = D-erythro-1-(imidazol-4-yl)glycerol 3-phosphate + 5-amino-1-(5-phospho-beta-D-ribosyl)imidazole-4-carboxamide + L-glutamate + H(+). Its pathway is amino-acid biosynthesis; L-histidine biosynthesis; L-histidine from 5-phospho-alpha-D-ribose 1-diphosphate: step 5/9. In terms of biological role, IGPS catalyzes the conversion of PRFAR and glutamine to IGP, AICAR and glutamate. The HisF subunit catalyzes the cyclization activity that produces IGP and AICAR from PRFAR using the ammonia provided by the HisH subunit. The sequence is that of Imidazole glycerol phosphate synthase subunit HisF from Shewanella amazonensis (strain ATCC BAA-1098 / SB2B).